Here is an 813-residue protein sequence, read N- to C-terminus: Lon protease (813 aa).

The Lon N-terminal domain maps to 14–207 (LPLLPLRGII…ILTEILAREM (194 aa)). Residue 359–366 (GPPGVGKT) participates in ATP binding. The region spanning 595–776 (ESQVGVATGL…DQVIREALLE (182 aa)) is the Lon proteolytic domain. Catalysis depends on residues Ser682 and Lys725.

Belongs to the peptidase S16 family. In terms of assembly, homohexamer. Organized in a ring with a central cavity.

The protein resides in the cytoplasm. It carries out the reaction Hydrolysis of proteins in presence of ATP.. Functionally, ATP-dependent serine protease that mediates the selective degradation of mutant and abnormal proteins as well as certain short-lived regulatory proteins. Required for cellular homeostasis and for survival from DNA damage and developmental changes induced by stress. Degrades polypeptides processively to yield small peptide fragments that are 5 to 10 amino acids long. Binds to DNA in a double-stranded, site-specific manner. The sequence is that of Lon protease from Heliobacterium modesticaldum (strain ATCC 51547 / Ice1).